We begin with the raw amino-acid sequence, 320 residues long: MRSAQVYRWQIPMDAGVVLRDRRLKTRDGLYVCLREGEREGWGEISPLPGFSQENWEEAQSVLLAWVNNWLAGDCELPQMPSVAFGVSCALAELTDTLPQAANYRAAPLCNGDPDDLILKLADMPGEKVAKVKVGLYEAVRDGMVVNLLLEAIPDLHLRLDANRAWTPLKGQQFAKYVNPDYRHRIAFLEEPCKTRDDSRAFARETGIAIAWDESLREPDFAFVAEEGVRAVVIKPTLTGSLEKVREQVQAAHALGLTAVISSSIESSLGLTQLARIAAWLTPDTIPGLDTLDLMQAQQVRRWPGSPLPLVDADVQEQLL.

Residue lysine 133 is the Proton donor of the active site. Mg(2+) contacts are provided by aspartate 161, glutamate 190, and aspartate 213. Lysine 235 functions as the Proton acceptor in the catalytic mechanism.

It belongs to the mandelate racemase/muconate lactonizing enzyme family. MenC type 1 subfamily. Requires a divalent metal cation as cofactor.

The enzyme catalyses (1R,6R)-6-hydroxy-2-succinyl-cyclohexa-2,4-diene-1-carboxylate = 2-succinylbenzoate + H2O. It participates in quinol/quinone metabolism; 1,4-dihydroxy-2-naphthoate biosynthesis; 1,4-dihydroxy-2-naphthoate from chorismate: step 4/7. Its pathway is quinol/quinone metabolism; menaquinone biosynthesis. Converts 2-succinyl-6-hydroxy-2,4-cyclohexadiene-1-carboxylate (SHCHC) to 2-succinylbenzoate (OSB). The chain is o-succinylbenzoate synthase from Shigella flexneri.